The following is a 79-amino-acid chain: ATP synthase subunit c (79 aa).

The next 2 helical transmembrane spans lie at 11-31 (MAAA…IGIL) and 53-73 (FFIV…LGLY).

The protein belongs to the ATPase C chain family. As to quaternary structure, F-type ATPases have 2 components, F(1) - the catalytic core - and F(0) - the membrane proton channel. F(1) has five subunits: alpha(3), beta(3), gamma(1), delta(1), epsilon(1). F(0) has three main subunits: a(1), b(2) and c(10-14). The alpha and beta chains form an alternating ring which encloses part of the gamma chain. F(1) is attached to F(0) by a central stalk formed by the gamma and epsilon chains, while a peripheral stalk is formed by the delta and b chains.

It is found in the cell inner membrane. Functionally, f(1)F(0) ATP synthase produces ATP from ADP in the presence of a proton or sodium gradient. F-type ATPases consist of two structural domains, F(1) containing the extramembraneous catalytic core and F(0) containing the membrane proton channel, linked together by a central stalk and a peripheral stalk. During catalysis, ATP synthesis in the catalytic domain of F(1) is coupled via a rotary mechanism of the central stalk subunits to proton translocation. In terms of biological role, key component of the F(0) channel; it plays a direct role in translocation across the membrane. A homomeric c-ring of between 10-14 subunits forms the central stalk rotor element with the F(1) delta and epsilon subunits. This chain is ATP synthase subunit c, found in Pectobacterium atrosepticum (strain SCRI 1043 / ATCC BAA-672) (Erwinia carotovora subsp. atroseptica).